Consider the following 330-residue polypeptide: DNA-directed RNA polymerase subunit alpha (330 aa).

The alpha N-terminal domain (alpha-NTD) stretch occupies residues 1–237 (MYTEINEMLT…RQLHAFVDMK (237 aa)). The interval 251 to 330 (FDPVLLRSVD…ENWPPASLGE (80 aa)) is alpha C-terminal domain (alpha-CTD).

Belongs to the RNA polymerase alpha chain family. Homodimer. The RNAP catalytic core consists of 2 alpha, 1 beta, 1 beta' and 1 omega subunit. When a sigma factor is associated with the core the holoenzyme is formed, which can initiate transcription.

The enzyme catalyses RNA(n) + a ribonucleoside 5'-triphosphate = RNA(n+1) + diphosphate. DNA-dependent RNA polymerase catalyzes the transcription of DNA into RNA using the four ribonucleoside triphosphates as substrates. The polypeptide is DNA-directed RNA polymerase subunit alpha (Legionella pneumophila (strain Paris)).